The chain runs to 151 residues: Metalloproteinase inhibitor 3 (151 aa).

In terms of domain architecture, NTR spans 1–108 (CNSDIVIRAK…GLNYRYHLGC (108 aa)). Intrachain disulfides connect Cys-1–Cys-108, Cys-115–Cys-120, and Cys-128–Cys-149. The interval 53–54 (ES) is involved in metalloproteinase-binding. The segment at 71–151 (GRVYDGKVYT…YQSKHYACIR (81 aa)) is mediates interaction with EFEMP1.

The protein belongs to the protease inhibitor I35 (TIMP) family. As to quaternary structure, interacts with EFEMP1.

The protein localises to the secreted. Its subcellular location is the extracellular space. It is found in the extracellular matrix. Complexes with metalloproteinases (such as collagenases) and irreversibly inactivates them by binding to their catalytic zinc cofactor. May form part of a tissue-specific acute response to remodeling stimuli. The chain is Metalloproteinase inhibitor 3 (TIMP3) from Oryctolagus cuniculus (Rabbit).